A 51-amino-acid chain; its full sequence is uncharacterized protein (51 aa).

This is an uncharacterized protein from Thermoproteus tenax virus 1 (strain KRA1) (TTV1).